We begin with the raw amino-acid sequence, 300 residues long: tRNA pseudouridine synthase B (300 aa).

Residue Asp44 is the Nucleophile of the active site.

This sequence belongs to the pseudouridine synthase TruB family. Type 1 subfamily.

The enzyme catalyses uridine(55) in tRNA = pseudouridine(55) in tRNA. Its function is as follows. Responsible for synthesis of pseudouridine from uracil-55 in the psi GC loop of transfer RNAs. This chain is tRNA pseudouridine synthase B, found in Corynebacterium diphtheriae (strain ATCC 700971 / NCTC 13129 / Biotype gravis).